Reading from the N-terminus, the 232-residue chain is Rho-related GTP-binding protein Rho6 (232 aa).

GTP is bound by residues 23–28 (QCGKTA), 38–45 (YPETYVPT), 67–71 (DTSGS), 125–128 (CKTD), and 169–170 (AF). Residues 42-50 (YVPTVFENY) carry the Effector region motif. Residue Cys-229 is modified to Cysteine methyl ester. The S-geranylgeranyl cysteine moiety is linked to residue Cys-229. A propeptide spans 230 to 232 (SIM) (removed in mature form).

This sequence belongs to the small GTPase superfamily. Rho family. In terms of assembly, binds GRB7 and PLXNB1. Interacts with PLXNA2. Interacts with UBXD5.

Its subcellular location is the cell membrane. It localises to the cytoplasm. It is found in the cytoskeleton. Lacks intrinsic GTPase activity. Has a low affinity for GDP, and constitutively binds GTP. Controls rearrangements of the actin cytoskeleton. Induces the Rac-dependent neuritic process formation in part by disruption of the cortical actin filaments. Causes the formation of many neuritic processes from the cell body with disruption of the cortical actin filaments. The protein is Rho-related GTP-binding protein Rho6 (RND1) of Bos taurus (Bovine).